The sequence spans 1056 residues: Sucrose-phosphate synthase (1056 aa).

Basic and acidic residues predominate over residues 112–123; sequence HVERERGRREAT. The disordered stretch occupies residues 112-132; it reads HVERERGRREATADMSEDLSE. 2 positions are modified to phosphoserine: Ser158 and Ser424. The interval 681 to 700 is disordered; it reads NWQRIDEGSENSDTDSAGDS.

This sequence belongs to the glycosyltransferase 1 family. As to quaternary structure, homodimer or homotetramer. Phosphorylated at Ser-158 and Ser-424.

It catalyses the reaction beta-D-fructose 6-phosphate + UDP-alpha-D-glucose = sucrose 6(F)-phosphate + UDP + H(+). It functions in the pathway glycan biosynthesis; sucrose biosynthesis; sucrose from D-fructose 6-phosphate and UDP-alpha-D-glucose: step 1/2. Its activity is regulated as follows. Activity is regulated by phosphorylation and moderated by concentration of metabolites and light. Plays a role in photosynthetic sucrose synthesis by catalyzing the rate-limiting step of sucrose biosynthesis from UDP-glucose and fructose- 6-phosphate. Involved in the regulation of carbon partitioning in the leaves of plants. May regulate the synthesis of sucrose and therefore play a major role as a limiting factor in the export of photoassimilates out of the leaf. Plays a role for sucrose availability that is essential for plant growth and fiber elongation. The sequence is that of Sucrose-phosphate synthase (SPS1) from Spinacia oleracea (Spinach).